The primary structure comprises 122 residues: uncharacterized protein (122 aa).

This is an uncharacterized protein from Escherichia coli O157:H7.